Here is a 297-residue protein sequence, read N- to C-terminus: Probable endonuclease 4 (297 aa).

The Zn(2+) site is built by His68, His109, Glu144, Asp178, His181, His213, Asp226, His228, and Glu258.

This sequence belongs to the AP endonuclease 2 family. The cofactor is Zn(2+).

It catalyses the reaction Endonucleolytic cleavage to 5'-phosphooligonucleotide end-products.. Its function is as follows. Endonuclease IV plays a role in DNA repair. It cleaves phosphodiester bonds at apurinic or apyrimidinic (AP) sites, generating a 3'-hydroxyl group and a 5'-terminal sugar phosphate. This chain is Probable endonuclease 4, found in Lysinibacillus sphaericus (strain C3-41).